The primary structure comprises 2625 residues: MRNIDEHMSERATLQSSGGYGERDSGVEPIAIIGMSCRLPGEASDPKGLWELLASGKSAWSKVPKDRFNMDAFHDPSNPTAGTTNTAGGHFIEEDLAAFDADFFGMNPVELEALDPQQRLLMEIAYESFENAGLPMKQLWGSNTGVYVGQWSNDYDQNLARDTEFPALYHTIGAGPAISSNRLSYFFNLRGPSFTVDTGCSASLVALHSAVQSLRAGETDASFVGGVNLLLDPQRFSYQSKLKMFSAQGRSYSFDHRANGYGRGEGCCGLVLKRLSAAKRDGDPIRAVIRNSVLNQDGRTPGISVPSGLAQEQAIKAAYSGARLHDGPDFVEAHGTGTAVGDPIEVKAIAAAFATIKTRDGQPIPVGSVKGNVGHTESCAGLAGVIKAVLMLENQTIPPQANFERLNPSLLLDEWNLYVPTVLEQRELRRISVNSFGYGGTNAHVILDRADAPTDQKRDSIFLGLDSAPQPKRKRLLILSATSEEGCSKVAQSLVDYVDQRFDSAATEAWLDRLAYTVNRKSIHSHRTTILASDLEEMLHQLSRVVQVPTPARVDVKSPKVAYVFSGQGAQYYNMGRELINTWPVFTKSLQRANQQLNTLGCEWDLMAELSRDAESSNLDNPAFGQPASTAIQLALCDTLADLGVVPVSVAGHSSGEIAAAYAAHALSFENAMTVSYHRGRLTAALVSKQTSPAGAMLAVGTSPDVAQEYIDSIDGPSSRVTIACYNSPSSVTLSGDIEGIEKLQQMFENKKIFNRLLRTNGAAYHSHHMQQIEEEYRNALEGVEATTAKIPLISSVTGRDSGSEVFGRDYWVENLVSPVRFDEATAQLCQDISLILELGAHETLGGPIRQTLKTLGPDARDVRYLSCLKRKSDAASTLLTTIGEVFADGIHVDLHTANNGFDKKLPRPLSDLPRYPFDHSRRYWHESRVSKEYKHRKFLPHELLGNMSTDVNHLEPKWRRYLKLKEIPWLRNHVVQGQIVFPAAGYLSMALEAVRRYTLSADPEAKISSYAYRNISFGKALVLSDEKLDNEITLSLIPESRTAKESWHDWVEFRIHTVSAGKPWTEHCRGRIRAVLDDSNEDHIEATADKRVVEQALSQSVRFVSPSAFYNLSRQNGLDWHKPFDNLVKIRASRETSVTVTESPRLERDDSLHNDSPYVIHPGTLDTALFHCVCAIVYSQKKIDVPVVPSFISELVIAGNARHAPGTRLVSHAIEVDNGEAHDVVINSAVDGHDQFLIRARGMILAKLPGGTSRSGSRKLTHESTWVPYCQKLTTQHLDRICKKDLPDGSAVEQNDMLNSLTVAFCRAAIEKVSYEQVREGYQQHFYRWMKKIVDGSMLESTPEPFMNGHLTNGLTNGITSNGTKHIPNGLSNGISKHQVNGIANGLPQDASNHIAQKHPDASSLTPKENALKVLTNGLSKDLPNGVSGKHDEFEILKSSSASPGEAAVRRVGENAASILTGEIDPISLLLHDGLLPKMYAEFRNQRCYHQIKAYIAELGLQNPSLRIIEIGGGSASASLPILQACNRDGQSSIAKYDFTDISSGFFLDARKTLADYSEIVDFHVLDIEQDASQQGIEKGSYDIVIACNVIHATVDIDVSLANAKGLLRPNGRLILMEITNPQPYYSLIFGAFPGWWAGAESGRVESPLLRGEQWSEKLIKHGFVDTEPVFRDFEEKQGGTLGVFATTMAEDVSERKPIAHINIVGLPTAPNAWSATDLARVLGKSSEISYIDLNDKSALLAPLRDAVIFLPEICDALTKSITEESFEALQRQIIGSNIVLMLGRGGAIDPSLPNGSLTTGFARTIRLEHPKVRFITLDLDPQSPYESSLTVVNEVLRSPVTDLSKPSADLECEFAERNGQLFVSRVVAEEKAEHYIKNATGKSILHDRNFLSPRNAMRAGLGIVGLLETFHWKPDPGMDGPLGPDQVRVELRAASINFRDILVATGQVQSLTEMKNDCSGVVVESGENMKSRFKPGDRVCAYYGQSYSNFPVVDGDCCSRIPDSMSFEVAASVPIVWGTVYHSLVDIAHLAEGEKILIHSGAGAVGQAAIALAQHLGAEVFTTAGSDQKRAMLAEKFNLPNDHIFSSRNTHFKQGIKELTKGQGVDVILNSLTGEMTRASCEVLTDFGRFIEIGKKDLIDDALLPTKFLLRNITFACVDLTQIIEKRHKQARRLLEKVVDLLASDAVKATEITTYPISEIEHAFRFVASGKHIGKVILTVAQDEVVKVSSASEYLTKSYTDLVQAASAPPQLAQLQTDAVYIVVGGLGGLGRCVVPWLADRGARTIVTLSRSGASSEQATTLIEEMQSRGVSVVAKACDIGSKESLRGVVEDIKGSLSLPIRGLINSAMSLQDVTFKDMTHEQWQKSLLPKVQGTWNLHECLPKDLDFFISMSSIVAISGNLGQSNYGAACSFQDSFAAFRRAQGLSGYSINIGPVSDAGFVSENEQVNMGMERKGFSSVTIAEVLANLDYVVTSAGNRTQNSIGLLPARPDASRSTWLQNKRLIHLAQHSGPRGEGEGGKSDEAQDALEAVGNATTAEGAEAAVLTAILQQLSKLLMTPVEQLSPRRTLDSYGVDSLIAVELKNWIGTYLEADIPLLVLRETNDIQHLARLAAEESRLVSLA.

Positions 1 to 10 (MRNIDEHMSE) are enriched in basic and acidic residues. The tract at residues 1 to 25 (MRNIDEHMSERATLQSSGGYGERDS) is disordered. The Ketosynthase family 3 (KS3) domain occupies 27-449 (VEPIAIIGMS…GTNAHVILDR (423 aa)). Active-site for beta-ketoacyl synthase activity residues include Cys-200, His-334, and His-375. A malonyl-CoA:ACP transacylase (MAT) domain region spans residues 563 to 883 (YVFSGQGAQY…DAASTLLTTI (321 aa)). Positions 942 to 1080 (HELLGNMSTD…GRIRAVLDDS (139 aa)) are N-terminal hotdog fold. A dehydratase (DH) domain region spans residues 942–1252 (HELLGNMSTD…GMILAKLPGG (311 aa)). The PKS/mFAS DH domain occupies 942–1255 (HELLGNMSTD…LAKLPGGTSR (314 aa)). His-974 acts as the Proton acceptor; for dehydratase activity in catalysis. Residues 1102–1255 (VRFVSPSAFY…LAKLPGGTSR (154 aa)) are C-terminal hotdog fold. Asp-1167 acts as the Proton donor; for dehydratase activity in catalysis. The methyltransferase (CMet) domain stretch occupies residues 1490–1673 (YHQIKAYIAE…GFVDTEPVFR (184 aa)). The interval 1907 to 2220 (GLLETFHWKP…SGKHIGKVIL (314 aa)) is enoyl reductase (ER) domain. The interval 2261–2439 (AVYIVVGGLG…GYSINIGPVS (179 aa)) is ketoreductase (KR) domain. Positions 2542–2619 (GAEAAVLTAI…HLARLAAEES (78 aa)) constitute a Carrier domain. The residue at position 2579 (Ser-2579) is an O-(pantetheine 4'-phosphoryl)serine.

Its pathway is antifungal biosynthesis. In terms of biological role, highly reducing polyketide synthase; part of the gene cluster that mediates the biosynthesis of the antifungal antibiotic FR901469, an inhibitor of beta-1,3-glucansynthase, exerting antifungal activity against the pathogenes Candida albicans and Aspergillus fumigatus. FR901469 is a cyclic depsipeptide containing 12 amino acid residues and a fatty acid chain. The NRPS frbI contains 12 modules responsible for the formation of the depsipeptide backbone which is denoted as Acyl-Thr-Ala-Tyr-Val-4OHPro-Thr-Thr-3OHPro-threo3OHGln-Gly-Thr-Orn-OH (C71H116N14O23). The PKS frbB is probably involved in the production of the hydrocarbon chain, and the acyl-CoA ligase frbC might be involved in the transport of the chain to the peptide ptoduct of frbI. Because FR901469 contains 3 hydroxylated amino acid residues, the 3 oxygenases frbA, frbH, and frbJ might be participating in amino acid hydroxylation. As no thioesterase domains were detected in frbI or frbB, the thioesterases frbD and frbE may instead release and cyclize the products of the NRPS and PKS, respectively. This chain is Highly reducing polyketide synthase frbB, found in Dothideomycetidae sp. (strain 11243) (Fungal sp. (strain No.11243)).